The following is a 66-amino-acid chain: Large ribosomal subunit protein bL35 (66 aa).

Residues 19–45 form a disordered region; sequence SGKVVAAQSTKRHGMTKRSKRSLRTRR. Positions 28-45 are enriched in basic residues; the sequence is TKRHGMTKRSKRSLRTRR.

This sequence belongs to the bacterial ribosomal protein bL35 family.

In Anaplasma phagocytophilum (strain HZ), this protein is Large ribosomal subunit protein bL35.